Reading from the N-terminus, the 97-residue chain is MTDLRHYDVIVSPSITEKSTLVSEQNQVVFNVAKGASKPEIKAAVEALFGVKVTAVNTLVRKGKLKRFRGFAGKQKDVKKAIITLAEGQSIDVSTGL.

The protein belongs to the universal ribosomal protein uL23 family. Part of the 50S ribosomal subunit. Contacts protein L29, and trigger factor when it is bound to the ribosome.

One of the early assembly proteins it binds 23S rRNA. One of the proteins that surrounds the polypeptide exit tunnel on the outside of the ribosome. Forms the main docking site for trigger factor binding to the ribosome. The chain is Large ribosomal subunit protein uL23 from Sinorhizobium fredii (strain NBRC 101917 / NGR234).